The primary structure comprises 255 residues: FMR1 neighbor protein (255 aa).

Residues 1-68 are Cytoplasmic-facing; it reads MSSHRRKAKG…ESLKMRVSKP (68 aa). Residues 69–89 traverse the membrane as a helical segment; it reads FGMLMLSIWILLFVCYYLSYY. The Extracellular segment spans residues 90 to 183; sequence LCSGSSYFVL…FAPFRDVPKQ (94 aa). A P-type domain is found at 125–184; it reads LLNFFFPTTCNLRENQVAKPCNELQDLSESECLRHKCCFSSSGTTSFKCFAPFRDVPKQM. Residues 184-204 traverse the membrane as a helical segment; that stretch reads MMQMFGLGAISLILVCLPIYC. At 205-255 the chain is on the cytoplasmic side; it reads RSLFWRSEPADDLQRQDNRVVTGLKKQRRKRKRKSEMLQKAARGREEHGDE. The disordered stretch occupies residues 220-255; the sequence is QDNRVVTGLKKQRRKRKRKSEMLQKAARGREEHGDE. Residues 229–238 are compositionally biased toward basic residues; sequence KKQRRKRKRK.

Testis-specific. Expressed in melanoma, sarcoma, lung, breast, bladder, esophageal and ovarian cancers.

Its subcellular location is the membrane. This Homo sapiens (Human) protein is FMR1 neighbor protein.